A 260-amino-acid chain; its full sequence is Small ribosomal subunit protein eS1 (260 aa).

Residues 1-18 (MAVGKNKRMSKGKKGGKK) are compositionally biased toward basic residues. A disordered region spans residues 1-20 (MAVGKNKRMSKGKKGGKKKA).

Belongs to the eukaryotic ribosomal protein eS1 family. In terms of assembly, component of the small ribosomal subunit. Mature ribosomes consist of a small (40S) and a large (60S) subunit. The 40S subunit contains about 33 different proteins and 1 molecule of RNA (18S). The 60S subunit contains about 49 different proteins and 3 molecules of RNA (25S, 5.8S and 5S).

It localises to the cytoplasm. This Ostreococcus lucimarinus (strain CCE9901) protein is Small ribosomal subunit protein eS1.